Here is a 177-residue protein sequence, read N- to C-terminus: Non-specific lipid transfer protein GPI-anchored 22 (177 aa).

Residues 1 to 29 (MARFMAYNQNPQMLALCITVAVMFLGVRS) form the signal peptide. 4 cysteine pairs are disulfide-bonded: C38–C81, C48–C63, C64–C108, and C79–C117. N-linked (GlcNAc...) asparagine glycosylation is present at N113. S152 is lipidated: GPI-anchor amidated serine. Positions 153-177 (SSIKGRDNKQFGLMMAGALSIWYIM) are cleaved as a propeptide — removed in mature form.

The protein belongs to the plant LTP family. As to expression, expressed in seedlings, preferentially in hypocotyls and roots. Also observed in siliques.

The protein resides in the cell membrane. Functionally, probable lipid transfer protein. This is Non-specific lipid transfer protein GPI-anchored 22 from Arabidopsis thaliana (Mouse-ear cress).